We begin with the raw amino-acid sequence, 84 residues long: Acetylcholine receptor subunit alpha (84 aa).

C7 and C21 are joined by a disulfide. N20 and N66 each carry an N-linked (GlcNAc...) asparagine glycan. A disulfide bond links C71 and C72.

The protein belongs to the ligand-gated ion channel (TC 1.A.9) family. Acetylcholine receptor (TC 1.A.9.1) subfamily. Alpha-1/CHRNA1 sub-subfamily. In terms of assembly, one of the alpha chains that assemble within the acetylcholine receptor, a pentamer of two alpha chains, a beta, a delta, and a gamma (in immature muscle) or epsilon (in mature muscle) chains. The muscle heteropentamer composed of alpha-1, beta-1, delta, epsilon subunits interacts with the alpha-conotoxin ImII.

The protein localises to the postsynaptic cell membrane. It is found in the cell membrane. The catalysed reaction is K(+)(in) = K(+)(out). The enzyme catalyses Na(+)(in) = Na(+)(out). Upon acetylcholine binding, the AChR responds by an extensive change in conformation that affects all subunits and leads to opening of an ion-conducting channel across the plasma membrane. The chain is Acetylcholine receptor subunit alpha (CHRNA1) from Herpestes ichneumon (Egyptian mongoose).